A 1841-amino-acid chain; its full sequence is Sodium channel protein type 4 subunit alpha (1841 aa).

The Cytoplasmic portion of the chain corresponds to 1–131; it reads MASSSLPTLV…RVAIKVLIHA (131 aa). The segment covering 32 to 60 has biased composition (basic and acidic residues); the sequence is AMEEEARLQRNKQMEIEEPERKPRSDLEA. A disordered region spans residues 32–63; that stretch reads AMEEEARLQRNKQMEIEEPERKPRSDLEAGKN. The stretch at 113–448 is one I repeat; sequence MLSPFSIVRR…VVAMAYAEQN (336 aa). Residues 132 to 150 traverse the membrane as a helical segment; it reads LFSMFIMITILTNCVFMTM. The Extracellular segment spans residues 151 to 157; it reads SNPPSWS. The helical transmembrane segment at 158–178 threads the bilayer; the sequence is KDVEYTFTGIYTFESLIKMLA. The Cytoplasmic segment spans residues 179 to 192; sequence RGFCIDDFTFLRDP. Residues 193–210 form a helical membrane-spanning segment; it reads WNWLDFSVITMAYVTEFV. Residues 211–216 lie on the Extracellular side of the membrane; the sequence is DLGNIS. N-linked (GlcNAc...) asparagine glycosylation occurs at Asn-214. A helical membrane pass occupies residues 217 to 233; sequence ALRTFRVLRALKTITVI. The Cytoplasmic portion of the chain corresponds to 234–252; that stretch reads PGLKTIVGALIQSVKKLSD. Residues 253–272 traverse the membrane as a helical segment; that stretch reads VMILTVFCLSVFALVGLQLF. Residues 273 to 385 lie on the Extracellular side of the membrane; it reads MGNLRQKCVR…PNYGYTSYDT (113 aa). A disulfide bridge links Cys-280 with Cys-354. 7 N-linked (GlcNAc...) asparagine glycosylation sites follow: Asn-288, Asn-291, Asn-297, Asn-303, Asn-315, Asn-327, and Asn-356. A disulfide bridge links Cys-363 with Cys-369. Positions 386-410 form an intramembrane region, pore-forming; it reads FSWAFLALFRLMTQDYWENLFQLTL. At 411 to 417 the chain is on the extracellular side; it reads RAAGKTY. Residues 418 to 438 form a helical membrane-spanning segment; that stretch reads MIFFVVIIFLGSFYLINLILA. At 439 to 572 the chain is on the cytoplasmic side; that stretch reads VVAMAYAEQN…HIILLIVMDP (134 aa). The segment at 484–522 is disordered; that stretch reads ALEGGEEADGDPTHSKDCNGSLDTSGEKGPPRPSCSAES. Residues 554–826 form an II repeat; sequence CCAPWVKFKH…QIAIGRIKWG (273 aa). The chain crosses the membrane as a helical span at residues 573–591; sequence FVDLGITICIVLNTLFMAM. The Extracellular segment spans residues 592–602; sequence EHYPMTEHFDN. Residues 603–622 form a helical membrane-spanning segment; it reads VLSVGNLVFTGIFTAEMVLK. Residues 623 to 636 lie on the Cytoplasmic side of the membrane; the sequence is LIAMDPYEYFQQGW. Residues 637–656 traverse the membrane as a helical segment; that stretch reads NIFDSFIVTLSLVELGLANV. Residues 657-658 lie on the Extracellular side of the membrane; it reads QG. Residues 659–676 traverse the membrane as a helical segment; the sequence is LSVLRSFRLLRVFKLAKS. Over 677–692 the chain is Cytoplasmic; that stretch reads WPTLNMLIKIIGNSVG. The helical transmembrane segment at 693-711 threads the bilayer; that stretch reads ALGNLTLVLAIIVFIFAVV. Topologically, residues 712-740 are extracellular; sequence GMQLFGKSYKECVCKIASDCSLPRWHMHD. Cys-725 and Cys-731 are joined by a disulfide. The pore-forming intramembrane region spans 741 to 761; the sequence is FFHSFLIVFRILCGEWIETMW. Residues 762-772 lie on the Extracellular side of the membrane; the sequence is DCMEVAGQAMC. The cysteines at positions 763 and 772 are disulfide-linked. Residues 773-791 form a helical membrane-spanning segment; sequence LTVFLMVMVIGNLVVLNLF. Over 792–1026 the chain is Cytoplasmic; sequence LALLLSSFSA…ACFKIVEHNW (235 aa). 2 disordered regions span residues 854 to 896 and 925 to 983; these read EPGG…LTDG and SDLE…EGEL. Basic and acidic residues predominate over residues 867–887; the sequence is EDEKKEPPPEDGNKELKDNHI. Acidic residues-rich tracts occupy residues 925-941 and 969-983; these read SDLE…FSEP and EDPE…EGEL. An III repeat occupies 1007 to 1320; it reads RGKMWWTLRR…KKYYNAMKKL (314 aa). Residues 1027–1044 form a helical membrane-spanning segment; that stretch reads FETFIVFMILLSSGALAF. Residues 1045-1057 are Extracellular-facing; sequence EDIYIEQRRVIRT. The chain crosses the membrane as a helical span at residues 1058–1076; sequence ILEYADKVFTYIFILEMLL. Residues 1077–1090 are Cytoplasmic-facing; the sequence is KWVAYGFKVYFTNA. A helical membrane pass occupies residues 1091 to 1109; the sequence is WCWLDFLIVDVSIISLVAN. Residues 1110-1117 lie on the Extracellular side of the membrane; sequence WLGYSELG. A helical transmembrane segment spans residues 1118–1136; that stretch reads PIKSLRTLRALRPLRALSR. Residues 1137-1153 lie on the Cytoplasmic side of the membrane; sequence FEGMRVVVNALLGAIPS. Residues 1154–1173 form a helical membrane-spanning segment; it reads IMNVLLVCLIFWLIFSIMGV. The Extracellular segment spans residues 1174-1224; the sequence is NLFAGKFYYCINTTTSERFDISVVNNKSECESLMYTGQVRWMNVKVNYDNV. Cys-1183 and Cys-1203 are oxidised to a cystine. 2 N-linked (GlcNAc...) asparagine glycosylation sites follow: Asn-1185 and Asn-1199. An intramembrane region (pore-forming) is located at residues 1225-1246; that stretch reads GLGYLSLLQVATFKGWMDIMYA. Residues 1247 to 1263 are Extracellular-facing; it reads AVDSREKEEQPDYEVNL. A helical membrane pass occupies residues 1264–1285; sequence YMYLYFVIFIIFGSFFTLNLFI. Residues 1286–1348 are Cytoplasmic-facing; that stretch reads GVIIDNFNQQ…MVYDFVTKQV (63 aa). Residues 1304–1306 form an important for rapid channel inactivation region; the sequence is IFM. Residues 1329-1627 form an IV repeat; it reads IPRPQNKIQG…WEKFDPDATQ (299 aa). The chain crosses the membrane as a helical span at residues 1349-1366; the sequence is FDISIMILICLNMVTMMV. Residues 1367-1377 lie on the Extracellular side of the membrane; the sequence is ETDDQSQLKVD. The helical transmembrane segment at 1378–1396 threads the bilayer; that stretch reads ILYNINMVFIIVFTGECVL. The Cytoplasmic portion of the chain corresponds to 1397 to 1408; it reads KMFALRHYYFTI. Residues 1409–1426 traverse the membrane as a helical segment; that stretch reads GWNIFDFVVVILSIVGLA. At 1427–1439 the chain is on the extracellular side; the sequence is LSDLIQKYFVSPT. A helical membrane pass occupies residues 1440-1456; that stretch reads LFRVIRLARIGRVLRLI. Over 1457–1475 the chain is Cytoplasmic; that stretch reads RGAKGIRTLLFALMMSLPA. A helical membrane pass occupies residues 1476 to 1493; the sequence is LFNIGLLLFLVMFIYSIF. Residues 1494–1515 are Extracellular-facing; the sequence is GMSNFAYVKKESGIDDMFNFET. Residues 1516–1538 constitute an intramembrane region (pore-forming); sequence FGNSIICLFEITTSAGWDGLLNP. At 1539 to 1568 the chain is on the extracellular side; that stretch reads ILNSGPPDCDPTLENPGTNIKGDCGNPSIG. A disulfide bridge links Cys-1547 with Cys-1562. Residues 1569–1591 traverse the membrane as a helical segment; the sequence is ICFFCSYIIISFLIVVNMYIAII. Topologically, residues 1592–1841 are cytoplasmic; that stretch reads LENFNVATEE…VRPGVKESLV (250 aa). One can recognise an IQ domain in the interval 1721–1750; that stretch reads EEVCAIKIQRAYRRHLLQRSVKQASYMYRH. Basic and acidic residues predominate over residues 1776–1794; the sequence is SEKEDNGVQSQGEKEKDST. A disordered region spans residues 1776 to 1841; that stretch reads SEKEDNGVQS…VRPGVKESLV (66 aa). A compositionally biased stretch (polar residues) spans 1801–1812; that stretch reads TEVTAPSSSDTA. Residues 1814–1826 show a composition bias toward pro residues; it reads TPPPPSPPPPSSP.

It belongs to the sodium channel (TC 1.A.1.10) family. Nav1.4/SCN4A subfamily. The Nav1.4 voltage-gated sodium channel consists of an ion-conducting alpha subunit SCN4A which is functional on its own and a regulatory beta subunit SCN1B. SCN1B strongly enhances the presence of SCN4A at the cell surface. SCN1B is also required for rapid channel inactivation and recovery after inactivation. It prevents the decrease of channel activity in response to repetitive, high-frequency depolarizations. Interacts with the syntrophins SNTA1, SNTB1 and SNTB2 (via PDZ domain); probably links SCN4A to the actin cytoskeleton and the extracellular matrix via the dystrophin-associated protein complex and regulates its localization in muscle cells. Interacts with TMEM233; probable regulator of the channel. As to expression, detected in quadriceps muscle (at protein level). Detected in hind-limb skeletal muscles, but not in heart or brain. Detected at low levels in the myocardium. According to Pubme=26427606 detected also in brain.

The protein resides in the cell membrane. The catalysed reaction is Na(+)(in) = Na(+)(out). Its activity is regulated as follows. The channel is inhibited by tetrodotoxin. Pore-forming subunit of Nav1.4, a voltage-gated sodium (Nav) channel that directly mediates the depolarizing phase of action potentials in excitable membranes. Navs, also called VGSCs (voltage-gated sodium channels) or VDSCs (voltage-dependent sodium channels), operate by switching between closed and open conformations depending on the voltage difference across the membrane. In the open conformation they allow Na(+) ions to selectively pass through the pore, along their electrochemical gradient. The influx of Na+ ions provokes membrane depolarization, initiating the propagation of electrical signals throughout cells and tissues. Highly expressed in skeletal muscles, Nav1.4 generates the action potential crucial for muscle contraction. The chain is Sodium channel protein type 4 subunit alpha from Mus musculus (Mouse).